The chain runs to 181 residues: Protein Syd (181 aa).

It belongs to the Syd family.

The protein resides in the cell inner membrane. Functionally, interacts with the SecY protein in vivo. May bind preferentially to an uncomplexed state of SecY, thus functioning either as a chelating agent for excess SecY in the cell or as a regulatory factor that negatively controls the translocase function. The protein is Protein Syd of Klebsiella pneumoniae (strain 342).